A 77-amino-acid polypeptide reads, in one-letter code: Serine protease inhibitor 1 (77 aa).

The first 17 residues, 1–17, serve as a signal peptide directing secretion; that stretch reads MMFTPLIVLTLLVLATA. Intrachain disulfides connect Cys21/Cys53, Cys30/Cys48, Cys33/Cys44, Cys37/Cys74, and Cys55/Cys68. The TIL domain maps to 21–74; it reads CGPNEQWSDCPGCELQCGESDKPCPAMCGDPKCYCSPDQYRRIPDGRCIRKIQC.

It is found in the secreted. Defends the organism against the host's proteinases. This is Serine protease inhibitor 1 from Anisakis simplex (Herring worm).